Reading from the N-terminus, the 150-residue chain is Large ribosomal subunit protein bL9 (150 aa).

This sequence belongs to the bacterial ribosomal protein bL9 family.

Binds to the 23S rRNA. This chain is Large ribosomal subunit protein bL9, found in Burkholderia ambifaria (strain MC40-6).